The primary structure comprises 437 residues: Bifunctional protein GlmU (437 aa).

The pyrophosphorylase stretch occupies residues 1–223; that stretch reads MHNTAVILAA…WDECRGVNSR (223 aa). UDP-N-acetyl-alpha-D-glucosamine is bound by residues 8–11, Lys22, Gln70, 75–76, 96–98, Gly135, Glu149, Asn164, and Asn221; these read LAAG, GT, and YGD. Asp98 serves as a coordination point for Mg(2+). Mg(2+) is bound at residue Asn221. A linker region spans residues 224–244; that stretch reads AELAAAEAAMQSRLRAAALAA. The interval 245–437 is N-acetyltransferase; that stretch reads GVTMTAPETV…AELRMTKGKR (193 aa). Positions 310 and 328 each coordinate UDP-N-acetyl-alpha-D-glucosamine. The active-site Proton acceptor is the His340. 2 residues coordinate UDP-N-acetyl-alpha-D-glucosamine: Tyr343 and Asn354. Acetyl-CoA is bound by residues Ala357, 363–364, Ser382, Ala400, and Arg417; that span reads NY.

In the N-terminal section; belongs to the N-acetylglucosamine-1-phosphate uridyltransferase family. The protein in the C-terminal section; belongs to the transferase hexapeptide repeat family. In terms of assembly, homotrimer. Mg(2+) serves as cofactor.

It localises to the cytoplasm. It carries out the reaction alpha-D-glucosamine 1-phosphate + acetyl-CoA = N-acetyl-alpha-D-glucosamine 1-phosphate + CoA + H(+). It catalyses the reaction N-acetyl-alpha-D-glucosamine 1-phosphate + UTP + H(+) = UDP-N-acetyl-alpha-D-glucosamine + diphosphate. Its pathway is nucleotide-sugar biosynthesis; UDP-N-acetyl-alpha-D-glucosamine biosynthesis; N-acetyl-alpha-D-glucosamine 1-phosphate from alpha-D-glucosamine 6-phosphate (route II): step 2/2. It participates in nucleotide-sugar biosynthesis; UDP-N-acetyl-alpha-D-glucosamine biosynthesis; UDP-N-acetyl-alpha-D-glucosamine from N-acetyl-alpha-D-glucosamine 1-phosphate: step 1/1. The protein operates within bacterial outer membrane biogenesis; LPS lipid A biosynthesis. In terms of biological role, catalyzes the last two sequential reactions in the de novo biosynthetic pathway for UDP-N-acetylglucosamine (UDP-GlcNAc). The C-terminal domain catalyzes the transfer of acetyl group from acetyl coenzyme A to glucosamine-1-phosphate (GlcN-1-P) to produce N-acetylglucosamine-1-phosphate (GlcNAc-1-P), which is converted into UDP-GlcNAc by the transfer of uridine 5-monophosphate (from uridine 5-triphosphate), a reaction catalyzed by the N-terminal domain. The chain is Bifunctional protein GlmU from Acidiphilium cryptum (strain JF-5).